We begin with the raw amino-acid sequence, 536 residues long: MDSNIDVEILSILSEASAPVGAKIIADSLKDRGYDIGERAVRYHLKVLDENSLTKKLGYSGREITEKGIEELEKANISFRIGSVFSQVIEKLYLSDFPSKVLINTAKFEGDYKTIKEMVLRSFEAGYSVGDYLNIKKKGNTVSVETLCSITFDNFLLKNGIIPTPEYGGIVKFEDYEPVNFEGVIDFKSSSIDPLVAFIMQGKTDVIGVIENGEGLVPANFRVIPKSSEKQFETILKKDMLNSVLAYGTENVLGMNLNPEQIGVVLVGGLTPLCVPHESGYTADISAATQLKDISSMEKKTKGFLEAKKKKGKFKVTPVLSKMLSKMQTINYDIEDKKGNVVVNTAKIPIEYKEEAINALKDSYENKLAISDRLKVECDDKFLNAYTICSLTVDGVFLKNKIPVIPYYGGILEVKADKKRFIEAIDYEGTSLDPHEVFFNKADGKNYILAGIRKVPMSASEKLIELNEKLGWNSIIEIGRPNNDICGVRVEKCMFGITTIGGTNPFANIRKNNIPVEMKTLHKSIDYSELTHYDDI.

The winged helix-turn-helix stretch occupies residues Val-7 to Leu-72. NRD regions lie at residues Arg-80–Phe-314 and Lys-315–Ile-536.

The protein belongs to the NrpR family. In terms of assembly, homotetramer. Binds to a single operator as a dimer and cooperatively to two operators as a dimer pair.

With respect to regulation, under nitrogen limitation, binding of the intracellular nitrogen metabolite 2-oxoglutarate to NrpR decreases the binding affinity of NrpR to DNA, leading to initiation of transcription. In terms of biological role, transcriptional repressor of nitrogen fixation and assimilation genes. Binds to two tandem operators in the glnA and nif promoters, thereby blocking transcription of the genes. This is Global nitrogen regulator NrpR from Methanococcus maripaludis (strain DSM 14266 / JCM 13030 / NBRC 101832 / S2 / LL).